An 810-amino-acid polypeptide reads, in one-letter code: Valine--tRNA ligase (810 aa).

The 'HIGH' region signature appears at 45–55 (PTISGQLHIGH). The 'KMSKS' region motif lies at 534–538 (KMSKS). ATP is bound at residue Lys537.

Belongs to the class-I aminoacyl-tRNA synthetase family. ValS type 2 subfamily. As to quaternary structure, monomer.

The protein localises to the cytoplasm. The catalysed reaction is tRNA(Val) + L-valine + ATP = L-valyl-tRNA(Val) + AMP + diphosphate. Functionally, catalyzes the attachment of valine to tRNA(Val). As ValRS can inadvertently accommodate and process structurally similar amino acids such as threonine, to avoid such errors, it has a 'posttransfer' editing activity that hydrolyzes mischarged Thr-tRNA(Val) in a tRNA-dependent manner. The polypeptide is Valine--tRNA ligase (Ehrlichia ruminantium (strain Welgevonden)).